A 329-amino-acid chain; its full sequence is Ketol-acid reductoisomerase (NADP(+)) (329 aa).

The region spanning 2–182 is the KARI N-terminal Rossmann domain; that stretch reads TQLFYDTDAD…GGTRAGILET (181 aa). NADP(+)-binding positions include 25 to 28, Ser-51, Ser-53, and 83 to 86; these read YGSQ and DEFQ. His-108 is a catalytic residue. NADP(+) is bound at residue Gly-134. A KARI C-terminal knotted domain is found at 183–328; it reads NFKEETETDL…KGLRSMFSWL (146 aa). Mg(2+) contacts are provided by Asp-191, Glu-195, Glu-227, and Glu-231. Ser-252 is a substrate binding site.

Belongs to the ketol-acid reductoisomerase family. It depends on Mg(2+) as a cofactor.

The enzyme catalyses (2R)-2,3-dihydroxy-3-methylbutanoate + NADP(+) = (2S)-2-acetolactate + NADPH + H(+). It carries out the reaction (2R,3R)-2,3-dihydroxy-3-methylpentanoate + NADP(+) = (S)-2-ethyl-2-hydroxy-3-oxobutanoate + NADPH + H(+). Its pathway is amino-acid biosynthesis; L-isoleucine biosynthesis; L-isoleucine from 2-oxobutanoate: step 2/4. It functions in the pathway amino-acid biosynthesis; L-valine biosynthesis; L-valine from pyruvate: step 2/4. Its function is as follows. Involved in the biosynthesis of branched-chain amino acids (BCAA). Catalyzes an alkyl-migration followed by a ketol-acid reduction of (S)-2-acetolactate (S2AL) to yield (R)-2,3-dihydroxy-isovalerate. In the isomerase reaction, S2AL is rearranged via a Mg-dependent methyl migration to produce 3-hydroxy-3-methyl-2-ketobutyrate (HMKB). In the reductase reaction, this 2-ketoacid undergoes a metal-dependent reduction by NADPH to yield (R)-2,3-dihydroxy-isovalerate. The protein is Ketol-acid reductoisomerase (NADP(+)) of Prochlorococcus marinus (strain MIT 9215).